The primary structure comprises 158 residues: Endoribonuclease YbeY (158 aa).

Positions 124, 128, and 134 each coordinate Zn(2+).

Belongs to the endoribonuclease YbeY family. It depends on Zn(2+) as a cofactor.

The protein resides in the cytoplasm. Its function is as follows. Single strand-specific metallo-endoribonuclease involved in late-stage 70S ribosome quality control and in maturation of the 3' terminus of the 16S rRNA. The protein is Endoribonuclease YbeY of Caldanaerobacter subterraneus subsp. tengcongensis (strain DSM 15242 / JCM 11007 / NBRC 100824 / MB4) (Thermoanaerobacter tengcongensis).